A 339-amino-acid chain; its full sequence is DNA-directed RNA polymerase subunit alpha (339 aa).

An alpha N-terminal domain (alpha-NTD) region spans residues 1–233; the sequence is MVREEIAVAT…DLFIPFLHAE (233 aa). Positions 267–339 are alpha C-terminal domain (alpha-CTD); it reads KKMALKSIFI…FGFDLPKNGK (73 aa).

Belongs to the RNA polymerase alpha chain family. In terms of assembly, in plastids the minimal PEP RNA polymerase catalytic core is composed of four subunits: alpha, beta, beta', and beta''. When a (nuclear-encoded) sigma factor is associated with the core the holoenzyme is formed, which can initiate transcription.

It is found in the plastid. Its subcellular location is the chloroplast. It catalyses the reaction RNA(n) + a ribonucleoside 5'-triphosphate = RNA(n+1) + diphosphate. Its function is as follows. DNA-dependent RNA polymerase catalyzes the transcription of DNA into RNA using the four ribonucleoside triphosphates as substrates. The protein is DNA-directed RNA polymerase subunit alpha of Piper cenocladum (Ant piper).